The chain runs to 342 residues: Oxygen-dependent coproporphyrinogen-III oxidase (342 aa).

Serine 98 is a substrate binding site. The a divalent metal cation site is built by histidine 102 and histidine 112. The active-site Proton donor is histidine 112. A substrate-binding site is contributed by 114–116; it reads NYR. 2 residues coordinate a divalent metal cation: histidine 146 and histidine 176. Residues 266–301 are important for dimerization; that stretch reads YVEFNLVWDRGTIFGLQTNGRTESILMSLPPLARWE.

This sequence belongs to the aerobic coproporphyrinogen-III oxidase family. In terms of assembly, homodimer. A divalent metal cation serves as cofactor.

It is found in the cytoplasm. The catalysed reaction is coproporphyrinogen III + O2 + 2 H(+) = protoporphyrinogen IX + 2 CO2 + 2 H2O. It functions in the pathway porphyrin-containing compound metabolism; protoporphyrin-IX biosynthesis; protoporphyrinogen-IX from coproporphyrinogen-III (O2 route): step 1/1. In terms of biological role, involved in the heme and chlorophyll biosynthesis. Catalyzes the aerobic oxidative decarboxylation of propionate groups of rings A and B of coproporphyrinogen-III to yield the vinyl groups in protoporphyrinogen-IX. This chain is Oxygen-dependent coproporphyrinogen-III oxidase, found in Prochlorococcus marinus (strain MIT 9515).